Consider the following 387-residue polypeptide: WD repeat-containing protein 89 (387 aa).

WD repeat units lie at residues 21–65 (KEPT…VLRE), 68–107 (GYPG…EKPV), 112–156 (GYPS…QNLS), 168–208 (THSD…EEDA), 214–254 (NSIS…TDEP), and 319–358 (GHAA…KTFT).

The protein is WD repeat-containing protein 89 (WDR89) of Homo sapiens (Human).